Consider the following 233-residue polypeptide: Small ribosomal subunit protein uS2 (233 aa).

It belongs to the universal ribosomal protein uS2 family.

The polypeptide is Small ribosomal subunit protein uS2 (Clostridium botulinum (strain Eklund 17B / Type B)).